The primary structure comprises 496 residues: UDP-glycosyltransferase 73C4 (496 aa).

UDP-alpha-D-glucose contacts are provided by residues Ser-297, 357-359 (SPQ), 374-382 (HCGWNSTLE), and 396-399 (FGDQ). The segment at 450-475 (SDDAKERRRRVKELGESAHKAVEEGG) is disordered. Basic and acidic residues predominate over residues 451-472 (DDAKERRRRVKELGESAHKAVE).

Belongs to the UDP-glycosyltransferase family.

The sequence is that of UDP-glycosyltransferase 73C4 (UGT73C4) from Arabidopsis thaliana (Mouse-ear cress).